A 556-amino-acid polypeptide reads, in one-letter code: MAREKEMQEFTRSFFRGRPDLSTLTHSIVRRRYLAHSGRSHLEPEEKQALKRLVEEELLKMQVDEAASREDKLDLTKKGKRPPTPCSDPERKRFRFNSESESGSEASSPDYFGPPAKNGVAAEVSPAKEENPRRASKAVEESSDEERQRDLPAQRGEESSEEEEKGYKGKTRKKPVVKKQAPGKASVSRKQAREESEESEAEPVQRTAKKVEGNKGTKSLKESEQESEEEILAQKKEQREEEVEEEEKEEDEEKGDWKPRTRSNGRRKSAREERSCKQKSQAKRLLGDSDSEEEQKEAASSGDDSGRDREPPVQRKSEDRTQLKGGKRLSGSSEDEEDSGKGEPTAKGSRKMARLGSTSGEESDLEREVSDSEAGGGPQGERKNRSSKKSSRKGRTRSSSSSSDGSPEAKGGKAGSGRRGEDHPAVMRLKRYIRACGAHRNYKKLLGSCCSHKERLSILRAELEALGMKGTPSLGKCRALKEQREEAAEVASLDVANIISGSGRPRRRTAWNPLGEAAPPGELYRRTLDSDEERPRPAPPDWSHMRGIISSDGESN.

A Phosphoserine modification is found at Ser27. The span at Asp64–Lys77 shows a compositional bias: basic and acidic residues. The interval Asp64–Val426 is disordered. Thr84 bears the Phosphothreonine mark. 8 positions are modified to phosphoserine: Ser87, Ser98, Ser100, Ser125, Ser142, Ser143, Ser159, and Ser160. The segment covering Glu99–Ser108 has biased composition (low complexity). Residues Pro126–Glu158 show a composition bias toward basic and acidic residues. Residues Lys168 to Val177 show a composition bias toward basic residues. 4 positions are modified to phosphoserine: Ser196, Ser199, Ser223, and Ser227. Over residues Lys209–Glu224 the composition is skewed to basic and acidic residues. The segment covering Glu240 to Lys254 has biased composition (acidic residues). Residues Arg260–Ser269 are compositionally biased toward basic residues. A phosphoserine mark is found at Ser289 and Ser291. A compositionally biased stretch (basic and acidic residues) spans Asp304 to Gln322. A phosphoserine mark is found at Ser330, Ser332, Ser333, and Ser357. The residue at position 358 (Thr358) is a Phosphothreonine. Phosphoserine occurs at positions 359, 363, 370, and 372. The span at Arg385–Thr396 shows a compositional bias: basic residues. The segment at Ser403 to Thr527 is interaction with the histone H2A-H2B complex. A Phosphothreonine modification is found at Thr471. Positions Ser502–Asn556 are disordered. A compositionally biased stretch (basic and acidic residues) spans Leu523–Arg536. Ser530, Ser550, Ser551, and Ser555 each carry phosphoserine.

As to quaternary structure, interacts (via C-terminus) with histone H2A-H2B dimers; the interaction is direct. Interacts with HIRA. Interacts with CK2. Post-translationally, phosphorylated by CK2. In terms of tissue distribution, widely expressed. Isoform 1 is predominant in skeletal muscle. Isoform 2 is predominant in liver and heart.

The protein localises to the nucleus. Its function is as follows. Histone chaperone that carries a H2A-H2B histone complex and facilitates its deposition onto chromatin. This is HIRA-interacting protein 3 (HIRIP3) from Homo sapiens (Human).